A 622-amino-acid polypeptide reads, in one-letter code: Palmitoyltransferase ZDHHC13 (622 aa).

The residue at position 1 (Met-1) is an N-acetylmethionine. The Cytoplasmic portion of the chain corresponds to 1–291 (MEGPGLGSQC…RLWRWLQKCE (291 aa)). 7 ANK repeats span residues 43–78 (PLIE…VRQP), 81–110 (ENVS…VVDQ), 115–144 (LNST…DPTL), 148–177 (EGFS…SVNM), 181–211 (NGQT…SLNV), 216–245 (HQNT…SLDI), and 249–277 (KGET…KMRA). Residues 292–312 (LFLLLMLSVITMWAIGYILDF) traverse the membrane as a helical segment. At 313-320 (NSDSWLLK) the chain is on the lumenal side. Residues 321–341 (GCLLVTLFFLTSLFPRFLVGY) form a helical membrane-spanning segment. Topologically, residues 342-347 (KNLVYL) are cytoplasmic. The chain crosses the membrane as a helical span at residues 348–368 (PTAFLLSSVFWIFMTWFILFF). The Lumenal segment spans residues 369-370 (PD). The helical transmembrane segment at 371–391 (LAGAPFYFSFIFSIVAFLYFF) threads the bilayer. At 392–470 (YKTWATDPGF…RCIGFGNHHY (79 aa)) the chain is on the cytoplasmic side. A DHHC domain is found at 426–476 (TFCTSCLIRKPLRSLHCHVCNCCVARYDQHCLWTGRCIGFGNHHYYIFFLF). The S-palmitoyl cysteine intermediate role is filled by Cys-456. The chain crosses the membrane as a helical span at residues 471–491 (YIFFLFFLSMVCGWIIYGSFI). Topologically, residues 492 to 518 (YLSSHCATTFKEDGLWTYLNQIVACSP) are lumenal. A helical membrane pass occupies residues 519–539 (WVLYILMLATFHFSWSTFLLL). The Cytoplasmic portion of the chain corresponds to 540-622 (NQLFQIAFLG…PAREKVLRSV (83 aa)).

Belongs to the DHHC palmitoyltransferase family. AKR/ZDHHC17 subfamily. Interacts (via ANK repeats) with CLIP3. Interacts (via ANK repeats) with DNAJC5 (via C-terminus). Interacts (via ANK repeats) with HTT. Interacts (via ANK repeats) with MAP6. Interacts (via ANK repeats) with SNAP23. Interacts (via ANK repeats) with SNAP25. May interact (via ANK repeats) with SPRED2.

It localises to the golgi apparatus membrane. Its subcellular location is the cytoplasmic vesicle membrane. It catalyses the reaction L-cysteinyl-[protein] + hexadecanoyl-CoA = S-hexadecanoyl-L-cysteinyl-[protein] + CoA. In terms of biological role, palmitoyltransferase that could catalyze the addition of palmitate onto various protein substrates. Palmitoyltransferase for HTT and GAD2. May play a role in Mg(2+) transport. This Homo sapiens (Human) protein is Palmitoyltransferase ZDHHC13.